The sequence spans 94 residues: Small ribosomal subunit protein bS18 (94 aa).

The protein belongs to the bacterial ribosomal protein bS18 family. As to quaternary structure, part of the 30S ribosomal subunit. Forms a tight heterodimer with protein bS6.

Functionally, binds as a heterodimer with protein bS6 to the central domain of the 16S rRNA, where it helps stabilize the platform of the 30S subunit. In Acetivibrio thermocellus (strain ATCC 27405 / DSM 1237 / JCM 9322 / NBRC 103400 / NCIMB 10682 / NRRL B-4536 / VPI 7372) (Clostridium thermocellum), this protein is Small ribosomal subunit protein bS18.